Reading from the N-terminus, the 181-residue chain is dCTP deaminase (181 aa).

DCTP is bound by residues 100 to 105 (RSTFAR) and aspartate 116. Residue glutamate 126 is the Proton donor/acceptor of the active site. DCTP contacts are provided by tyrosine 158 and glutamine 165. Residues 160–181 (GKYQGQRGVTPPKLDNSSSKNF) are disordered.

The protein belongs to the dCTP deaminase family. In terms of assembly, homotrimer.

The enzyme catalyses dCTP + H2O + H(+) = dUTP + NH4(+). It functions in the pathway pyrimidine metabolism; dUMP biosynthesis; dUMP from dCTP (dUTP route): step 1/2. In terms of biological role, catalyzes the deamination of dCTP to dUTP. This chain is dCTP deaminase, found in Desulfurococcus amylolyticus (strain DSM 18924 / JCM 16383 / VKM B-2413 / 1221n) (Desulfurococcus kamchatkensis).